Reading from the N-terminus, the 182-residue chain is T-cell surface glycoprotein CD3 gamma chain (182 aa).

The N-terminal stretch at 1–22 (MEQGKGLAGLFLVISLLQGTMA) is a signal peptide. Residues 23 to 116 (QQKEEKHLVK…CIELNMGTVS (94 aa)) lie on the Extracellular side of the membrane. The region spanning 37 to 94 (QGDGSVLLTCDFNEKTITWLKDGHRISPPNATKSTWNLGNGAKDPRGMYQCRGAKKKS) is the Ig-like domain. Residues Cys46 and Cys87 are joined by a disulfide bond. Residue Asn66 is glycosylated (N-linked (GlcNAc...) asparagine). A helical membrane pass occupies residues 117–137 (GFIFAEIISIFFLAVGVYFIA). Over 138-182 (GQDGVRQSRASDKQTLLQNEQVYQPLKDREYEQYSRLQGNQVRKK) the chain is Cytoplasmic. Ser145 bears the Phosphoserine mark. Residue Ser148 is modified to Phosphoserine; by PKC. In terms of domain architecture, ITAM spans 149–177 (DKQTLLQNEQVYQPLKDREYEQYSRLQGN). The Di-leucine motif signature appears at 153–154 (LL).

As to quaternary structure, the TCR-CD3 complex is composed of a CD3D/CD3E and a CD3G/CD3E heterodimers that preferentially associate with TCRalpha and TCRbeta, respectively, to form TCRalpha/CD3E/CD3G and TCRbeta/CD3G/CD3E trimers. In turn, the hexamer interacts with CD3Z homodimer to form the TCR-CD3 complex. Alternatively, TCRalpha and TCRbeta can be replaced by TCRgamma and TCRdelta. In terms of processing, phosphorylated on Tyr residues after T-cell receptor triggering by LCK in association with CD4/CD8. Phosphorylated also by PKC; leading to the TCR complex down-regulation. Phosphorylated on Tyr residues after T-cell receptor triggering by LCK in association with CD4/CD8.

Its subcellular location is the cell membrane. Part of the TCR-CD3 complex present on T-lymphocyte cell surface that plays an essential role in adaptive immune response. When antigen presenting cells (APCs) activate T-cell receptor (TCR), TCR-mediated signals are transmitted across the cell membrane by the CD3 chains CD3D, CD3E, CD3G and CD3Z. All CD3 chains contain immunoreceptor tyrosine-based activation motifs (ITAMs) in their cytoplasmic domain. Upon TCR engagement, these motifs become phosphorylated by Src family protein tyrosine kinases LCK and FYN, resulting in the activation of downstream signaling pathways. In addition to this role of signal transduction in T-cell activation, CD3G plays an essential role in the dynamic regulation of TCR expression at the cell surface. Indeed, constitutive TCR cycling is dependent on the di-leucine-based (diL) receptor-sorting motif present in CD3G. The polypeptide is T-cell surface glycoprotein CD3 gamma chain (Cd3g) (Rattus norvegicus (Rat)).